We begin with the raw amino-acid sequence, 170 residues long: Ribosome maturation factor RimM (170 aa).

The region spanning 97 to 170 (HPDEYYWVDL…RIVVDWDPEF (74 aa)) is the PRC barrel domain.

This sequence belongs to the RimM family. In terms of assembly, binds ribosomal protein uS19.

The protein resides in the cytoplasm. Its function is as follows. An accessory protein needed during the final step in the assembly of 30S ribosomal subunit, possibly for assembly of the head region. Essential for efficient processing of 16S rRNA. May be needed both before and after RbfA during the maturation of 16S rRNA. It has affinity for free ribosomal 30S subunits but not for 70S ribosomes. This chain is Ribosome maturation factor RimM, found in Xylella fastidiosa (strain M12).